The sequence spans 123 residues: Large ribosomal subunit protein bL12 (123 aa).

Belongs to the bacterial ribosomal protein bL12 family. Homodimer. Part of the ribosomal stalk of the 50S ribosomal subunit. Forms a multimeric L10(L12)X complex, where L10 forms an elongated spine to which 2 to 4 L12 dimers bind in a sequential fashion. Binds GTP-bound translation factors.

Forms part of the ribosomal stalk which helps the ribosome interact with GTP-bound translation factors. Is thus essential for accurate translation. This chain is Large ribosomal subunit protein bL12, found in Bartonella quintana (strain Toulouse) (Rochalimaea quintana).